A 463-amino-acid chain; its full sequence is Fumarate hydratase class II (463 aa).

Substrate-binding positions include 98–100 (SGT), 129–132 (HPND), 139–141 (SSN), and Thr-187. His-188 functions as the Proton donor/acceptor in the catalytic mechanism. Residue Ser-318 is part of the active site. Substrate contacts are provided by residues Ser-319 and 324-326 (KVN).

The protein belongs to the class-II fumarase/aspartase family. Fumarase subfamily. Homotetramer.

The protein localises to the cytoplasm. The catalysed reaction is (S)-malate = fumarate + H2O. Its pathway is carbohydrate metabolism; tricarboxylic acid cycle; (S)-malate from fumarate: step 1/1. Functionally, involved in the TCA cycle. Catalyzes the stereospecific interconversion of fumarate to L-malate. The polypeptide is Fumarate hydratase class II (Rhizobium meliloti (strain 1021) (Ensifer meliloti)).